The chain runs to 484 residues: Malonate-semialdehyde dehydrogenase 1 (484 aa).

The NAD(+) site is built by F153, K177, E180, R181, S230, and T252. C285 acts as the Nucleophile in catalysis. Residue E385 participates in NAD(+) binding.

This sequence belongs to the aldehyde dehydrogenase family. IolA subfamily. As to quaternary structure, homotetramer.

The catalysed reaction is 3-oxopropanoate + NAD(+) + CoA + H2O = hydrogencarbonate + acetyl-CoA + NADH + H(+). It carries out the reaction 2-methyl-3-oxopropanoate + NAD(+) + CoA + H2O = propanoyl-CoA + hydrogencarbonate + NADH + H(+). It functions in the pathway polyol metabolism; myo-inositol degradation into acetyl-CoA; acetyl-CoA from myo-inositol: step 7/7. Functionally, catalyzes the oxidation of malonate semialdehyde (MSA) and methylmalonate semialdehyde (MMSA) into acetyl-CoA and propanoyl-CoA, respectively. Is involved in a myo-inositol catabolic pathway. Bicarbonate, and not CO2, is the end-product of the enzymatic reaction. This chain is Malonate-semialdehyde dehydrogenase 1, found in Geobacillus thermodenitrificans (strain NG80-2).